Consider the following 103-residue polypeptide: Large ribosomal subunit protein bL21 (103 aa).

It belongs to the bacterial ribosomal protein bL21 family. In terms of assembly, part of the 50S ribosomal subunit. Contacts protein L20.

Functionally, this protein binds to 23S rRNA in the presence of protein L20. This chain is Large ribosomal subunit protein bL21, found in Aliivibrio fischeri (strain ATCC 700601 / ES114) (Vibrio fischeri).